The chain runs to 129 residues: MAKQPTRARKRVRKQVADGVAHIHASFNNTIVTITDRQGNALSWATAGGSGFRGSRKSTPFAAQVAAERCGEMAKEYGVKNLEVMVKGPGPGRESTIRALNAAGFRITNIVDATPIPHNGCRPPKKRRV.

It belongs to the universal ribosomal protein uS11 family. As to quaternary structure, part of the 30S ribosomal subunit. Interacts with proteins S7 and S18. Binds to IF-3.

Functionally, located on the platform of the 30S subunit, it bridges several disparate RNA helices of the 16S rRNA. Forms part of the Shine-Dalgarno cleft in the 70S ribosome. The chain is Small ribosomal subunit protein uS11 from Photobacterium profundum (strain SS9).